A 239-amino-acid chain; its full sequence is THAP domain-containing protein 3 (239 aa).

The segment at 1 to 82 adopts a THAP-type zinc-finger fold; the sequence is MPKSCAARQC…LKHNAVPTVF (82 aa). 2 disordered regions span residues 88–125 and 139–174; these read PQLV…LGRK and VGGL…PTQP. The HCFC1-binding motif (HBM) signature appears at 176-179; it reads DHSY.

As to quaternary structure, component of a THAP1/THAP3-HCFC1-OGT complex that contains at least, either THAP1 or THAP3, HCFC1 and OGT. Interacts directly with OGT and HCFC1 (via its HBM).

Functionally, component of a THAP1/THAP3-HCFC1-OGT complex that is required for the regulation of the transcriptional activity of RRM1. The polypeptide is THAP domain-containing protein 3 (THAP3) (Bos taurus (Bovine)).